Here is a 213-residue protein sequence, read N- to C-terminus: Cytokinin riboside 5'-monophosphate phosphoribohydrolase LOG1 (213 aa).

Substrate contacts are provided by residues E78, R96 to K97, G113 to E119, and T125.

Belongs to the LOG family. Expressed in roots and shoots. Detected in the vascular tissues of roots, cotyledons, leaves and pistils, in the shoot apical meristem and in immature flowers.

It localises to the cytoplasm. The protein localises to the nucleus. The enzyme catalyses N(6)-(dimethylallyl)adenosine 5'-phosphate + H2O = N(6)-dimethylallyladenine + D-ribose 5-phosphate. It catalyses the reaction 9-ribosyl-trans-zeatin 5'-phosphate + H2O = trans-zeatin + D-ribose 5-phosphate. Functionally, cytokinin-activating enzyme working in the direct activation pathway. Phosphoribohydrolase that converts inactive cytokinin nucleotides to the biologically active free-base forms. The sequence is that of Cytokinin riboside 5'-monophosphate phosphoribohydrolase LOG1 (LOG1) from Arabidopsis thaliana (Mouse-ear cress).